We begin with the raw amino-acid sequence, 296 residues long: NAD kinase (296 aa).

D73 (proton acceptor) is an active-site residue. NAD(+)-binding positions include 73–74 (DG), K78, 151–152 (NE), R178, D180, and 191–196 (TAHAMS).

This sequence belongs to the NAD kinase family. Requires a divalent metal cation as cofactor.

It localises to the cytoplasm. The enzyme catalyses NAD(+) + ATP = ADP + NADP(+) + H(+). In terms of biological role, involved in the regulation of the intracellular balance of NAD and NADP, and is a key enzyme in the biosynthesis of NADP. Catalyzes specifically the phosphorylation on 2'-hydroxyl of the adenosine moiety of NAD to yield NADP. The chain is NAD kinase from Francisella tularensis subsp. novicida (strain U112).